Consider the following 182-residue polypeptide: UPF0301 protein NMC1274 (182 aa).

Belongs to the UPF0301 (AlgH) family.

The sequence is that of UPF0301 protein NMC1274 from Neisseria meningitidis serogroup C / serotype 2a (strain ATCC 700532 / DSM 15464 / FAM18).